We begin with the raw amino-acid sequence, 236 residues long: Orotidine 5'-phosphate decarboxylase (236 aa).

Substrate-binding positions include D17, K39, 66-75, T125, R186, Q195, G215, and R216; that span reads DLKFHDIPNT. K68 functions as the Proton donor in the catalytic mechanism.

It belongs to the OMP decarboxylase family. Type 1 subfamily. In terms of assembly, homodimer.

The enzyme catalyses orotidine 5'-phosphate + H(+) = UMP + CO2. It participates in pyrimidine metabolism; UMP biosynthesis via de novo pathway; UMP from orotate: step 2/2. Catalyzes the decarboxylation of orotidine 5'-monophosphate (OMP) to uridine 5'-monophosphate (UMP). This is Orotidine 5'-phosphate decarboxylase from Buchnera aphidicola subsp. Schizaphis graminum (strain Sg).